Here is a 66-residue protein sequence, read N- to C-terminus: Large ribosomal subunit protein uL29 (66 aa).

This sequence belongs to the universal ribosomal protein uL29 family.

This is Large ribosomal subunit protein uL29 from Borreliella burgdorferi (strain ZS7) (Borrelia burgdorferi).